We begin with the raw amino-acid sequence, 313 residues long: Beta-ketoacyl-[acyl-carrier-protein] synthase III (313 aa).

Residues Cys-112 and His-238 contribute to the active site. Residues Gln-239–Arg-243 form an ACP-binding region. Asn-268 is a catalytic residue.

This sequence belongs to the thiolase-like superfamily. FabH family. In terms of assembly, homodimer.

The protein localises to the cytoplasm. The enzyme catalyses malonyl-[ACP] + acetyl-CoA + H(+) = 3-oxobutanoyl-[ACP] + CO2 + CoA. It participates in lipid metabolism; fatty acid biosynthesis. In terms of biological role, catalyzes the condensation reaction of fatty acid synthesis by the addition to an acyl acceptor of two carbons from malonyl-ACP. Catalyzes the first condensation reaction which initiates fatty acid synthesis and may therefore play a role in governing the total rate of fatty acid production. Possesses both acetoacetyl-ACP synthase and acetyl transacylase activities. Its substrate specificity determines the biosynthesis of branched-chain and/or straight-chain of fatty acids. In Staphylococcus aureus (strain COL), this protein is Beta-ketoacyl-[acyl-carrier-protein] synthase III.